We begin with the raw amino-acid sequence, 255 residues long: Glioma pathogenesis-related protein 1 (255 aa).

The first 17 residues, 1 to 17, serve as a signal peptide directing secretion; sequence MQVILAVIVWMASSVSS. The 126-residue stretch at 39–164 folds into the SCP domain; sequence QVHNQLRSKV…PNGANFICDY (126 aa). Residues 224–244 traverse the membrane as a helical segment; it reads SLFLIAKSVLLLLSVIITIWV.

The protein belongs to the CRISP family.

The protein resides in the membrane. The polypeptide is Glioma pathogenesis-related protein 1 (Glipr1) (Mus musculus (Mouse)).